We begin with the raw amino-acid sequence, 173 residues long: Large ribosomal subunit protein uL5 (173 aa).

It belongs to the universal ribosomal protein uL5 family. Component of the large ribosomal subunit.

It localises to the nucleus. The protein localises to the cytoplasm. Its function is as follows. Component of the ribosome, a large ribonucleoprotein complex responsible for the synthesis of proteins in the cell. The small ribosomal subunit (SSU) binds messenger RNAs (mRNAs) and translates the encoded message by selecting cognate aminoacyl-transfer RNA (tRNA) molecules. The large subunit (LSU) contains the ribosomal catalytic site termed the peptidyl transferase center (PTC), which catalyzes the formation of peptide bonds, thereby polymerizing the amino acids delivered by tRNAs into a polypeptide chain. The nascent polypeptides leave the ribosome through a tunnel in the LSU and interact with protein factors that function in enzymatic processing, targeting, and the membrane insertion of nascent chains at the exit of the ribosomal tunnel. In Encephalitozoon cuniculi (strain GB-M1) (Microsporidian parasite), this protein is Large ribosomal subunit protein uL5 (RPL11).